The primary structure comprises 341 residues: Anthranilate phosphoribosyltransferase (341 aa).

Residues Gly-80, 83-84, Thr-88, 90-93, 108-116, and Ser-120 each bind 5-phospho-alpha-D-ribose 1-diphosphate; these read GD, NIST, and KHGNRAVSS. Gly-80 is a binding site for anthranilate. Ser-92 provides a ligand contact to Mg(2+). Anthranilate is bound at residue Asn-111. Arg-166 contributes to the anthranilate binding site. The Mg(2+) site is built by Asp-225 and Glu-226.

The protein belongs to the anthranilate phosphoribosyltransferase family. Homodimer. Mg(2+) is required as a cofactor.

It carries out the reaction N-(5-phospho-beta-D-ribosyl)anthranilate + diphosphate = 5-phospho-alpha-D-ribose 1-diphosphate + anthranilate. It functions in the pathway amino-acid biosynthesis; L-tryptophan biosynthesis; L-tryptophan from chorismate: step 2/5. Catalyzes the transfer of the phosphoribosyl group of 5-phosphorylribose-1-pyrophosphate (PRPP) to anthranilate to yield N-(5'-phosphoribosyl)-anthranilate (PRA). The polypeptide is Anthranilate phosphoribosyltransferase (Priestia megaterium (strain ATCC 12872 / QMB1551) (Bacillus megaterium)).